A 460-amino-acid chain; its full sequence is L-seryl-tRNA(Sec) selenium transferase (460 aa).

Lys293 is modified (N6-(pyridoxal phosphate)lysine).

It belongs to the SelA family. It depends on pyridoxal 5'-phosphate as a cofactor.

The protein resides in the cytoplasm. It carries out the reaction L-seryl-tRNA(Sec) + selenophosphate + H(+) = L-selenocysteinyl-tRNA(Sec) + phosphate. The protein operates within aminoacyl-tRNA biosynthesis; selenocysteinyl-tRNA(Sec) biosynthesis; selenocysteinyl-tRNA(Sec) from L-seryl-tRNA(Sec) (bacterial route): step 1/1. Converts seryl-tRNA(Sec) to selenocysteinyl-tRNA(Sec) required for selenoprotein biosynthesis. In Pasteurella multocida (strain Pm70), this protein is L-seryl-tRNA(Sec) selenium transferase.